The sequence spans 112 residues: Putative pterin-4-alpha-carbinolamine dehydratase (112 aa).

The protein belongs to the pterin-4-alpha-carbinolamine dehydratase family.

The enzyme catalyses (4aS,6R)-4a-hydroxy-L-erythro-5,6,7,8-tetrahydrobiopterin = (6R)-L-erythro-6,7-dihydrobiopterin + H2O. This chain is Putative pterin-4-alpha-carbinolamine dehydratase, found in Shewanella sp. (strain MR-7).